We begin with the raw amino-acid sequence, 1544 residues long: Telomerase-binding protein EST1A (1544 aa).

Composition is skewed to basic and acidic residues over residues 25 to 48 (HGDD…KRPD), 108 to 141 (LNDH…KIIE), and 177 to 209 (GASK…EEKR). Disordered stretches follow at residues 25-503 (HGDD…RGRG), 536-573 (RGRG…SQHQ), 936-964 (QVER…GEDA), and 976-996 (VSGT…QDGE). A compositionally biased stretch (polar residues) spans 223–244 (SVETPSANKTENAVENISNKVS). 3 stretches are compositionally biased toward basic and acidic residues: residues 249–273 (ETVE…EGRK), 283–330 (MGED…EGRK), and 338–369 (EASR…DSKR). Low complexity predominate over residues 389–400 (TYSTSSASSGTS). Basic and acidic residues-rich tracts occupy residues 421–432 (TLERATGQREFV) and 458–495 (VWER…EQAS). Over residues 536 to 545 (RGRGGRGGGT) the composition is skewed to gly residues. Residues 547 to 558 (RLWDPNNPDKKP) show a composition bias toward basic and acidic residues. Over residues 562–573 (SSQQSQHASQHQ) the composition is skewed to low complexity. The segment covering 936–947 (QVERRLKQDSDG) has biased composition (basic and acidic residues). The segment covering 976-986 (VSGTSRPTGSE) has biased composition (polar residues). Positions 1369 to 1522 (FYLVPDTNGF…LLTDDRNLRV (154 aa)) constitute a PINc domain.

As to quaternary structure, may form homooligomers. Associated component of the telomerase holoenzyme complex. Mn(2+) serves as cofactor.

The protein localises to the nucleus. Its subcellular location is the nucleolus. It is found in the chromosome. It localises to the telomere. The protein resides in the cytoplasm. The protein localises to the cytosol. In terms of biological role, component of the telomerase ribonucleoprotein (RNP) complex that is essential for the replication of chromosome termini. Required for normal embryonic development. Plays a role in nonsense-mediated mRNA decay. The sequence is that of Telomerase-binding protein EST1A (smg6) from Danio rerio (Zebrafish).